Consider the following 734-residue polypeptide: ATP-dependent RNA helicase SUV3L, mitochondrial (734 aa).

Residues 1–60 constitute a mitochondrion transit peptide; that stretch reads MAAAAAIAAALLRRSTSSQHHRRILLLPLLSHLQRAAPRSPSPWDPPPHHRFFFSSDVTA. The segment at 58–88 is disordered; the sequence is VTAEGDSKPRPPLDGKQLWREVSTSEPATGA. The segment covering 62-76 has biased composition (basic and acidic residues); sequence GDSKPRPPLDGKQLW. The Helicase ATP-binding domain maps to 198-356; sequence FARAMRRRVV…RFKPLVVEAK (159 aa). 211-218 serves as a coordination point for ATP; that stretch reads GPTNSGKT. In terms of domain architecture, Helicase C-terminal spans 357–525; it reads TLLGDLKNVR…SFAIQFPDLT (169 aa). 2 N-linked (GlcNAc...) asparagine glycosylation sites follow: Asn-594 and Asn-614. The interval 667–734 is disordered; it reads ASWKPTSRQQ…QDPSSLNFVA (68 aa). The span at 684–693 shows a compositional bias: acidic residues; sequence EEDNDVEQAS. The span at 695–709 shows a compositional bias: basic and acidic residues; it reads DNAKNDSEDGYERSI. A glycan (N-linked (GlcNAc...) asparagine) is linked at Asn-699. Residues 725–734 are compositionally biased toward polar residues; the sequence is QDPSSLNFVA.

The protein belongs to the helicase family. In terms of assembly, homodimer; in free form. Component of the mitochondrial degradosome (mtEXO) complex which is a heteropentamer containing 2 copies of SUPV3L1 and 3 copies of PNPT1. Mg(2+) serves as cofactor. The cofactor is Mn(2+).

It is found in the nucleus. The protein resides in the mitochondrion matrix. It localises to the mitochondrion nucleoid. It carries out the reaction ATP + H2O = ADP + phosphate + H(+). Its function is as follows. Major helicase player in mitochondrial RNA metabolism. Component of the mitochondrial degradosome (mtEXO) complex, that degrades 3' overhang double-stranded RNA with a 3'-to-5' directionality in an ATP-dependent manner. ATPase and ATP-dependent multisubstrate helicase, able to unwind double-stranded (ds) DNA and RNA, and RNA/DNA heteroduplexes in the 5'-to-3' direction. Plays a role in the RNA surveillance system in mitochondria; regulates the stability of mature mRNAs, the removal of aberrantly formed mRNAs and the rapid degradation of non coding processing intermediates. Confers salinity and drought stress tolerances by maintaining both photosynthesis and antioxidant machinery, probably via an increase in plant hormones levels such as gibberellic acid (GA(3)), the cytokinin zeatin (Z) and indole-3-acetic acid (IAA). In Oryza sativa subsp. japonica (Rice), this protein is ATP-dependent RNA helicase SUV3L, mitochondrial.